Here is a 267-residue protein sequence, read N- to C-terminus: Glutamate 5-kinase (267 aa).

ATP is bound at residue lysine 15. 3 residues coordinate substrate: serine 55, aspartate 142, and asparagine 158. ATP is bound by residues 178 to 179 (SD) and 220 to 226 (TGGMATK).

It belongs to the glutamate 5-kinase family.

The protein localises to the cytoplasm. The enzyme catalyses L-glutamate + ATP = L-glutamyl 5-phosphate + ADP. Its pathway is amino-acid biosynthesis; L-proline biosynthesis; L-glutamate 5-semialdehyde from L-glutamate: step 1/2. In terms of biological role, catalyzes the transfer of a phosphate group to glutamate to form L-glutamate 5-phosphate. This chain is Glutamate 5-kinase, found in Ligilactobacillus salivarius (strain UCC118) (Lactobacillus salivarius).